Reading from the N-terminus, the 187-residue chain is Translation initiation factor IF-3 (187 aa).

This sequence belongs to the IF-3 family. In terms of assembly, monomer.

It is found in the cytoplasm. Functionally, IF-3 binds to the 30S ribosomal subunit and shifts the equilibrium between 70S ribosomes and their 50S and 30S subunits in favor of the free subunits, thus enhancing the availability of 30S subunits on which protein synthesis initiation begins. This is Translation initiation factor IF-3 from Leptospira biflexa serovar Patoc (strain Patoc 1 / Ames).